The sequence spans 418 residues: UDP-N-acetylglucosamine 1-carboxyvinyltransferase (418 aa).

22 to 23 (KN) is a binding site for phosphoenolpyruvate. Arg91 provides a ligand contact to UDP-N-acetyl-alpha-D-glucosamine. Cys115 (proton donor) is an active-site residue. Cys115 bears the 2-(S-cysteinyl)pyruvic acid O-phosphothioketal mark. Residues Asp305 and Ile327 each coordinate UDP-N-acetyl-alpha-D-glucosamine.

It belongs to the EPSP synthase family. MurA subfamily.

Its subcellular location is the cytoplasm. The enzyme catalyses phosphoenolpyruvate + UDP-N-acetyl-alpha-D-glucosamine = UDP-N-acetyl-3-O-(1-carboxyvinyl)-alpha-D-glucosamine + phosphate. It participates in cell wall biogenesis; peptidoglycan biosynthesis. In terms of biological role, cell wall formation. Adds enolpyruvyl to UDP-N-acetylglucosamine. The sequence is that of UDP-N-acetylglucosamine 1-carboxyvinyltransferase from Aeromonas salmonicida (strain A449).